The sequence spans 336 residues: 3-hydroxyisobutyrate dehydrogenase, mitochondrial (336 aa).

The transit peptide at 1–36 (MAASLRLLGAASGLRYWSRRLRPAAGSFAAVCSRSV) directs the protein to the mitochondrion. Residue 40–68 (TPVGFIGLGNMGNPMAKNLMKHGYPLIIY) participates in NAD(+) binding. An N6-acetyllysine; alternate mark is found at K60 and K76. K60 and K76 each carry N6-succinyllysine; alternate. K95 carries the post-translational modification N6-succinyllysine. Residues 103 to 104 (LP) and N108 each bind NAD(+). The residue at position 121 (K121) is an N6-acetyllysine. Residue T134 participates in NAD(+) binding. The residue at position 141 (K141) is an N6-succinyllysine. N6-acetyllysine is present on K145. At K149 the chain carries N6-acetyllysine; alternate. At K149 the chain carries N6-succinyllysine; alternate. K209 is an active-site residue. K238 and K242 each carry N6-acetyllysine; alternate. N6-succinyllysine; alternate occurs at positions 238 and 242. K284 serves as a coordination point for NAD(+). Residue K297 is modified to N6-succinyllysine. An N6-acetyllysine; alternate modification is found at K321. An N6-succinyllysine; alternate modification is found at K321.

The protein belongs to the HIBADH-related family. 3-hydroxyisobutyrate dehydrogenase subfamily. As to quaternary structure, homodimer. As to expression, detected in skin fibroblasts.

It localises to the mitochondrion. The catalysed reaction is 3-hydroxy-2-methylpropanoate + NAD(+) = 2-methyl-3-oxopropanoate + NADH + H(+). It functions in the pathway amino-acid degradation; L-valine degradation. This is 3-hydroxyisobutyrate dehydrogenase, mitochondrial (HIBADH) from Homo sapiens (Human).